A 359-amino-acid polypeptide reads, in one-letter code: Tropomodulin-1 (359 aa).

A disordered region spans residues 39–61 (PDNALLPAGLRQKDQTTKAPTGP). Residues 39–138 (PDNALLPAGL…CDIAAILGMH (100 aa)) are tropomyosin-binding.

The protein belongs to the tropomodulin family. In terms of assembly, binds to the N-terminus of tropomyosin and to actin. Interacts with FLII.

It is found in the cytoplasm. The protein localises to the cytoskeleton. Its function is as follows. Blocks the elongation and depolymerization of the actin filaments at the pointed end. The Tmod/TM complex contributes to the formation of the short actin protofilament, which in turn defines the geometry of the membrane skeleton. May play an important role in regulating the organization of actin filaments by preferentially binding to a specific tropomyosin isoform at its N-terminus. This chain is Tropomodulin-1 (TMOD1), found in Bos taurus (Bovine).